The sequence spans 451 residues: Adenylyltransferase and sulfurtransferase MOCS3-2 (451 aa).

Residues 42–62 (GEDSDEAEESSNDMPTPQTKL) are disordered. Positions 43–52 (EDSDEAEESS) are enriched in acidic residues. Residue Thr60 is modified to Phosphothreonine. Residues Gly99, Asp120, 127–131 (SNLHR), Lys144, and 188–189 (DN) each bind ATP. The Zn(2+) site is built by Cys229 and Cys232. Catalysis depends on Cys246, which acts as the Glycyl thioester intermediate; for adenylyltransferase activity. Residues Cys304 and Cys307 each contribute to the Zn(2+) site. The region spanning 353–449 (QSQPHLLLDV…WTGSVDATFP (97 aa)) is the Rhodanese domain. Cys408 serves as the catalytic Cysteine persulfide intermediate; for sulfurtransferase activity.

In the N-terminal section; belongs to the HesA/MoeB/ThiF family. UBA4 subfamily. The cofactor is Zn(2+).

The protein resides in the cytoplasm. The enzyme catalyses [molybdopterin-synthase sulfur-carrier protein]-C-terminal Gly-Gly + ATP + H(+) = [molybdopterin-synthase sulfur-carrier protein]-C-terminal Gly-Gly-AMP + diphosphate. The catalysed reaction is [molybdopterin-synthase sulfur-carrier protein]-C-terminal Gly-Gly-AMP + S-sulfanyl-L-cysteinyl-[cysteine desulfurase] + AH2 = [molybdopterin-synthase sulfur-carrier protein]-C-terminal-Gly-aminoethanethioate + L-cysteinyl-[cysteine desulfurase] + A + AMP + 2 H(+). It participates in tRNA modification; 5-methoxycarbonylmethyl-2-thiouridine-tRNA biosynthesis. The protein operates within cofactor biosynthesis; molybdopterin biosynthesis. Plays a central role in 2-thiolation of mcm(5)S(2)U at tRNA wobble positions of cytosolic tRNA(Lys), tRNA(Glu) and tRNA(Gln). Also essential during biosynthesis of the molybdenum cofactor. Acts by mediating the C-terminal thiocarboxylation of sulfur carriers URM1 and MOCS2A. Its N-terminus first activates URM1 and MOCS2A as acyl-adenylates (-COAMP), then the persulfide sulfur on the catalytic cysteine is transferred to URM1 and MOCS2A to form thiocarboxylation (-COSH) of their C-terminus. The reaction probably involves hydrogen sulfide that is generated from the persulfide intermediate and that acts as a nucleophile towards URM1 and MOCS2A. Subsequently, a transient disulfide bond is formed. Does not use thiosulfate as sulfur donor; NFS1 probably acting as a sulfur donor for thiocarboxylation reactions. The chain is Adenylyltransferase and sulfurtransferase MOCS3-2 from Drosophila pseudoobscura pseudoobscura (Fruit fly).